Reading from the N-terminus, the 501-residue chain is ADP,ATP carrier protein 3 (501 aa).

A run of 12 helical transmembrane segments spans residues 23–43, 59–79, 90–110, 146–166, 183–203, 227–247, 293–313, 326–346, 361–381, 383–403, 446–466, and 470–490; these read LKLF…FGAL, IISF…TVLY, YIFY…AYII, YALM…LMFW, PVLG…LVFF, IILQ…MFLF, IALL…PWKA, VNFM…FMII, LLTP…IIFI, EIGT…VGAI, FGKS…PTAT, and IIIY…WNII.

Belongs to the ADP/ATP translocase tlc family.

The protein localises to the cell membrane. Functionally, provides the rickettsial cell with host ATP in exchange for rickettsial ADP. This is an obligate exchange system. This energy acquiring activity is an important component of rickettsial parasitism. In Rickettsia typhi (strain ATCC VR-144 / Wilmington), this protein is ADP,ATP carrier protein 3 (tlcC).